Consider the following 301-residue polypeptide: Probable alpha-L-glutamate ligase (301 aa).

Residues 104–287 enclose the ATP-grasp domain; the sequence is LQILARKGIG…VAGKIIEYLE (184 aa). Residues Lys141, 178 to 179, Asp187, and 211 to 213 contribute to the ATP site; these read EY and RSN. Residues Asp248, Glu260, and Asn262 each contribute to the Mg(2+) site. The Mn(2+) site is built by Asp248, Glu260, and Asn262.

Belongs to the RimK family. Requires Mg(2+) as cofactor. It depends on Mn(2+) as a cofactor.

This Picosynechococcus sp. (strain ATCC 27264 / PCC 7002 / PR-6) (Agmenellum quadruplicatum) protein is Probable alpha-L-glutamate ligase.